A 640-amino-acid polypeptide reads, in one-letter code: 5-aminolevulinate synthase, non-specific, mitochondrial (640 aa).

The transit peptide at 1–56 (METVVRSCPFLSRVPQAFLQKAGKSLLFYAQNCPKMMEVGAKPAPRALSTAAVHYQ) directs the protein to the mitochondrion. Disordered stretches follow at residues 60 to 103 (ETPP…TSQG) and 143 to 163 (EVAE…GGDP). Residues 75–92 (VQQTPDGSQQSPDGTQLP) are compositionally biased toward polar residues. Residues R217, S334, and K353 each contribute to the substrate site. Residues S386, H414, and T442 each contribute to the pyridoxal 5'-phosphate site. K445 is an active-site residue. K445 bears the N6-(pyridoxal phosphate)lysine mark. 2 residues coordinate pyridoxal 5'-phosphate: T474 and T475. T562 is a substrate binding site. P576 is modified (hydroxyproline).

It belongs to the class-II pyridoxal-phosphate-dependent aminotransferase family. As to quaternary structure, homodimer. Interacts (hydroxylated form) with VHL. Pyridoxal 5'-phosphate is required as a cofactor. In terms of processing, in normoxia, is hydroxylated at Pro-576, promoting interaction with VHL, initiating ubiquitination and subsequent degradation via the proteasome. Ubiquitinated; in normoxia following hydroxylation and interaction with VHL, leading to its subsequent degradation via the proteasome.

It is found in the mitochondrion inner membrane. The catalysed reaction is succinyl-CoA + glycine + H(+) = 5-aminolevulinate + CO2 + CoA. The protein operates within porphyrin-containing compound metabolism; protoporphyrin-IX biosynthesis; 5-aminolevulinate from glycine: step 1/1. Its function is as follows. Catalyzes the pyridoxal 5'-phosphate (PLP)-dependent condensation of succinyl-CoA and glycine to form aminolevulinic acid (ALA), with CoA and CO2 as by-products. The sequence is that of 5-aminolevulinate synthase, non-specific, mitochondrial (ALAS1) from Pongo abelii (Sumatran orangutan).